A 243-amino-acid chain; its full sequence is Ribosomal RNA small subunit methyltransferase J (243 aa).

S-adenosyl-L-methionine contacts are provided by residues 112 to 113 and D164; that span reads ER.

This sequence belongs to the methyltransferase superfamily. RsmJ family.

It localises to the cytoplasm. The enzyme catalyses guanosine(1516) in 16S rRNA + S-adenosyl-L-methionine = N(2)-methylguanosine(1516) in 16S rRNA + S-adenosyl-L-homocysteine + H(+). In terms of biological role, specifically methylates the guanosine in position 1516 of 16S rRNA. This chain is Ribosomal RNA small subunit methyltransferase J, found in Legionella pneumophila (strain Corby).